The following is a 706-amino-acid chain: Envelope glycoprotein H (706 aa).

An N-terminal signal peptide occupies residues 1–18 (MQLLCVFCLVLLWEVGAA). The Virion surface portion of the chain corresponds to 19–682 (SLSEVKLHLD…LYEERAHVVL (664 aa)). Asn60 carries N-linked (GlcNAc...) asparagine; by host glycosylation. An interaction with gL region spans residues 165 to 229 (DKFQYTGAMT…QSGDYSLVIV (65 aa)). An intrachain disulfide couples Cys278 to Cys335. Asn435 carries N-linked (GlcNAc...) asparagine; by host glycosylation. 2 cysteine pairs are disulfide-bonded: Cys454–Cys478 and Cys534–Cys587. Residues Asn549 and Asn604 are each glycosylated (N-linked (GlcNAc...) asparagine; by host). A disulfide bond links Cys612 and Cys615. N-linked (GlcNAc...) asparagine; by host glycosylation occurs at Asn664. Residues 683–703 (AIILYFIAFALGIFLVHKIVM) form a helical membrane-spanning segment. The Intravirion segment spans residues 704–706 (FFL).

The protein belongs to the herpesviridae glycoprotein H family. Interacts with glycoprotein L (gL); this interaction is necessary for the correct processing and cell surface expression of gH. The heterodimer gH/gL seems to interact with gB trimers during fusion. The heterodimer gH/gL interacts with host EPHA2 to facilitate virus internalization and fusion. Interacts with glycoprotein 42/BZLF2. N-glycosylated, O-glycosylated, and sialylated.

The protein resides in the virion membrane. Its subcellular location is the host cell membrane. It is found in the host endosome membrane. Its function is as follows. The heterodimer glycoprotein H-glycoprotein L is required for the fusion of viral and plasma membranes leading to virus entry into the host cell. Following initial binding to host receptor, membrane fusion is mediated by the fusion machinery composed of gB and the heterodimer gH/gL. May also be involved in the fusion between the virion envelope and the outer nuclear membrane during virion morphogenesis. The heterodimer gH/gL targets also host EPHA2 to promote viral entry. This is Envelope glycoprotein H from Homo sapiens (Human).